Reading from the N-terminus, the 111-residue chain is WAP four-disulfide core domain protein 12 (111 aa).

An N-terminal signal peptide occupies residues 1–23 (MGSSSFLVLMVSLVLVTLVAVEG). The 48-residue stretch at 27–74 (GIEKAGVCPADNVRCFKSDPPQCHTDQDCLGERKCCYLHCGFKCVIPV) folds into the WAP domain. Disulfide bonds link Cys34–Cys62, Cys41–Cys66, Cys49–Cys61, and Cys55–Cys70. The disordered stretch occupies residues 80-111 (GGNKDEDVSRPYPEPGWEAKCPGSSSTRCPQK). Residues 102–111 (GSSSTRCPQK) show a composition bias toward polar residues.

As to expression, highly expressed in prostate, skin, lung and esophagus. Weakly expressed in skeletal muscle, epididymis, kidney, trachea, salivary gland, testis and seminal vesicle.

It is found in the secreted. Functionally, antibacterial protein. Putative acid-stable proteinase inhibitor. This Homo sapiens (Human) protein is WAP four-disulfide core domain protein 12 (WFDC12).